Consider the following 146-residue polypeptide: Cyanate hydratase (146 aa).

Catalysis depends on residues arginine 87, glutamate 90, and serine 113.

It belongs to the cyanase family.

The enzyme catalyses cyanate + hydrogencarbonate + 3 H(+) = NH4(+) + 2 CO2. Its function is as follows. Catalyzes the reaction of cyanate with bicarbonate to produce ammonia and carbon dioxide. The chain is Cyanate hydratase from Trichormus variabilis (strain ATCC 29413 / PCC 7937) (Anabaena variabilis).